Reading from the N-terminus, the 534-residue chain is CTP synthase (534 aa).

Residues 1-267 form an amidoligase domain region; that stretch reads MTKYIFVTGG…DQIVCDHLKL (267 aa). Serine 13 is a CTP binding site. Serine 13 contacts UTP. An ATP-binding site is contributed by 14 to 19; sequence SIGKGI. Tyrosine 54 lines the L-glutamine pocket. Position 71 (aspartate 71) interacts with ATP. Residues aspartate 71 and glutamate 141 each contribute to the Mg(2+) site. CTP-binding positions include 148 to 150, 188 to 193, and lysine 224; these read DIE and KTKPTQ. UTP contacts are provided by residues 188–193 and lysine 224; that span reads KTKPTQ. Positions 292-534 constitute a Glutamine amidotransferase type-1 domain; sequence KIALVGKYVE…FVTAAVENAK (243 aa). Glycine 354 contacts L-glutamine. The active-site Nucleophile; for glutamine hydrolysis is the cysteine 381. L-glutamine contacts are provided by residues 382–385, glutamate 405, and arginine 463; that span reads LGMQ. Residues histidine 508 and glutamate 510 contribute to the active site.

Belongs to the CTP synthase family. As to quaternary structure, homotetramer.

It carries out the reaction UTP + L-glutamine + ATP + H2O = CTP + L-glutamate + ADP + phosphate + 2 H(+). The catalysed reaction is L-glutamine + H2O = L-glutamate + NH4(+). It catalyses the reaction UTP + NH4(+) + ATP = CTP + ADP + phosphate + 2 H(+). The protein operates within pyrimidine metabolism; CTP biosynthesis via de novo pathway; CTP from UDP: step 2/2. With respect to regulation, allosterically activated by GTP, when glutamine is the substrate; GTP has no effect on the reaction when ammonia is the substrate. The allosteric effector GTP functions by stabilizing the protein conformation that binds the tetrahedral intermediate(s) formed during glutamine hydrolysis. Inhibited by the product CTP, via allosteric rather than competitive inhibition. Functionally, catalyzes the ATP-dependent amination of UTP to CTP with either L-glutamine or ammonia as the source of nitrogen. Regulates intracellular CTP levels through interactions with the four ribonucleotide triphosphates. In Streptococcus thermophilus (strain CNRZ 1066), this protein is CTP synthase.